Reading from the N-terminus, the 360-residue chain is Vignain (360 aa).

A signal peptide spans 1 to 20; it reads MQKFILLALSLALVLAITES. Residues 21 to 124 constitute a propeptide, activation peptide; it reads FDFHEKELES…NGTFMYEKVD (104 aa). A glycan (N-linked (GlcNAc...) asparagine) is linked at asparagine 115. Disulfide bonds link cysteine 147–cysteine 189, cysteine 181–cysteine 222, and cysteine 280–cysteine 332. Cysteine 150 is a catalytic residue. Residues histidine 286 and asparagine 307 contribute to the active site. The tract at residues 341-360 is disordered; the sequence is PIKKSSNNPSGIKSSPKDEL. Positions 344-353 are enriched in polar residues; that stretch reads KSSNNPSGIK. Residues 354-360 constitute a propeptide, removed in mature form; sequence SSPKDEL. The tract at residues 357–360 is prevents secretion from ER; it reads KDEL.

Belongs to the peptidase C1 family. Post-translationally, the potential N-glycosylation site at Asn-115 is not glycosylated.

The protein resides in the cytoplasmic vesicle. With respect to regulation, low pH triggers activation of the protease and removal of the propeptide and the KDEL motif. In terms of biological role, involved in programmed cell death. Shows a pronounced preference for hydrophobic residues in the P2 position and no obvious preference in the P1 position of the cleavage site. Accepts proline at the P1 and P1' positions. The sequence is that of Vignain (CYSEP) from Ricinus communis (Castor bean).